A 58-amino-acid polypeptide reads, in one-letter code: Galectin-1 (58 aa).

Positions 2–58 (GITXTSLHVAPGARLAVKGDIPAGAKSWVINLGKGENDIMLHFNARFDAHGDIRTIV) constitute a Galectin domain. Residues 43 to 47 (HFNAR) and histidine 51 each bind a beta-D-galactoside.

Monomer. Detected in most tissues, most abundantly in skin.

The protein localises to the secreted. It localises to the extracellular space. Its subcellular location is the extracellular matrix. Its function is as follows. May regulate cell apoptosis and cell differentiation. Binds beta-galactoside and a wide array of complex carbohydrates. This Podarcis hispanicus (Iberian wall lizard) protein is Galectin-1.